Here is a 472-residue protein sequence, read N- to C-terminus: Putative ankyrin repeat protein L675 (472 aa).

8 ANK repeats span residues Tyr125–Leu156, Asp187–Ile216, Tyr265–Ile295, His297–Tyr323, Asn325–Ser351, Asn352–Ala381, Asn382–Ile411, and Asp413–Asp440.

The polypeptide is Putative ankyrin repeat protein L675 (Acanthamoeba polyphaga (Amoeba)).